The chain runs to 157 residues: 2-C-methyl-D-erythritol 2,4-cyclodiphosphate synthase (157 aa).

Residues D8 and H10 each contribute to the a divalent metal cation site. 4-CDP-2-C-methyl-D-erythritol 2-phosphate is bound by residues 8-10 and 34-35; these read DVH and HS. H42 lines the a divalent metal cation pocket. 4-CDP-2-C-methyl-D-erythritol 2-phosphate contacts are provided by residues 56 to 58, 61 to 65, 132 to 135, and F139; these read DIG, FPDTD, and TTEE.

It belongs to the IspF family. As to quaternary structure, homotrimer. A divalent metal cation is required as a cofactor.

It catalyses the reaction 4-CDP-2-C-methyl-D-erythritol 2-phosphate = 2-C-methyl-D-erythritol 2,4-cyclic diphosphate + CMP. It participates in isoprenoid biosynthesis; isopentenyl diphosphate biosynthesis via DXP pathway; isopentenyl diphosphate from 1-deoxy-D-xylulose 5-phosphate: step 4/6. Its function is as follows. Involved in the biosynthesis of isopentenyl diphosphate (IPP) and dimethylallyl diphosphate (DMAPP), two major building blocks of isoprenoid compounds. Catalyzes the conversion of 4-diphosphocytidyl-2-C-methyl-D-erythritol 2-phosphate (CDP-ME2P) to 2-C-methyl-D-erythritol 2,4-cyclodiphosphate (ME-CPP) with a corresponding release of cytidine 5-monophosphate (CMP). This Clostridium botulinum (strain Eklund 17B / Type B) protein is 2-C-methyl-D-erythritol 2,4-cyclodiphosphate synthase.